The chain runs to 56 residues: Large ribosomal subunit protein bL32 (56 aa).

The disordered stretch occupies residues 1-23; that stretch reads MAVQQNKSTRSKRGMRRSHNALP. Residues 9 to 19 are compositionally biased toward basic residues; sequence TRSKRGMRRSH.

It belongs to the bacterial ribosomal protein bL32 family.

This chain is Large ribosomal subunit protein bL32, found in Blochmanniella floridana.